The following is a 990-amino-acid chain: FTIFLGVALLQGVLTLSPIPVPEEEWAEFSRMLRDPSYRLPTTTRPRHYAVTLTPYFDVVPAGVSGLTTFSFDGEVTIYISPTQANVNEIVLHCNDLTIQSLRVTYVSGNSEVDITATGQTFTCEMPYSFLRIRTSTPLVMNQEYIIRSTFRGNLQTNMRGFYRSWYVDRTGKRWMATTQFQPGHARQAFPCYDEPGFKATFDITMNREADFSPTISNMPIRATTTLTNGRISETFFTTPLTSTYLLAFIVSHYQVISNNNNAARPFRIYARNNVGSQGDWSLEMGEKLLLAMENYTAIPYYTMAQNLDMKQAAIPDFSAGAMENWGLLTYREALILYDPLNSNHHYRQRVANIVSHEIAHMWFGNLVTCAWWDNLWLNEGFARFSQYYLTATVDPELGYEIRFIPEQLQVAMFSDSVDSAHALTDTSVNDPVAVSAHFSTITYARGAAILRMTQHLLSYDTFVKGLRQYLRARQFDVAEPYHLFSALDAAAAEDNALAAYRGITIDAYFRTWSEKAGHPLLSVTVDHESGRMTLVQARWERNTGVSRFPGLWHIPITWTRAGAPDFENLKPSQVMTGQSLVIDRGTRGQEWVIFNKQVSGFYRVNYDNTTWGLITRALRSANRTVIHELSRSQIVDDVFQLARSGVMSYQRALNILSYLRFEDAYAPWLSAISGFNWVIRRFAHDAANLQTLQNQIIGLSEAVVARLGFTEVSGGTYMTDLQRLHVMQFLCNVGHQQCIDAGRQNFLNWRNGSFIPANMRPWVYCTGLRYGSAEDFNYFWNRYIVEDLSNEKVVMLEAAGCTRDQASLEKFLNAIVSGNDDVRPQDHSSALSSAITSNDVNTMRAFDWLTKNVDQITRTLGSITSPLNTITSRLLTEAQMTQVQTWLDANRNTIGAAYNTGVNGIATSRANLQWSANRMSEFLRFFETGFVDDVPSEATTVAPPAETTVTPSTFPPTVAPATTPAPGSGNIAALSVVSLLVTLAINMVA.

Residues 1 to 15 form the signal peptide; the sequence is FTIFLGVALLQGVLT. A propeptide spans 16 to 35 (activation peptide); the sequence is LSPIPVPEEEWAEFSRMLRD. N-linked (GlcNAc...) asparagine glycosylation occurs at Asn295. A substrate-binding site is contributed by 321–325; that stretch reads GAMEN. His357 serves as a coordination point for Zn(2+). Catalysis depends on Glu358, which acts as the Proton acceptor. His361 and Glu380 together coordinate Zn(2+). Asn609, Asn623, and Asn752 each carry an N-linked (GlcNAc...) asparagine glycan. Gly968 carries GPI-anchor amidated glycine lipidation. Residues 969–990 constitute a propeptide, removed in mature form; it reads SGNIAALSVVSLLVTLAINMVA.

This sequence belongs to the peptidase M1 family. Zn(2+) serves as cofactor. In terms of tissue distribution, midgut brush-border membrane.

Its subcellular location is the cell membrane. Binds to the B.thuringiensis toxin, CryIA(C). This is Membrane alanyl aminopeptidase from Manduca sexta (Tobacco hawkmoth).